We begin with the raw amino-acid sequence, 390 residues long: Transforming growth factor beta-1 proprotein (390 aa).

The first 29 residues, 1-29 (MPPSRLRLLPLLLPLLWLLVLAPGRPASG), serve as a signal peptide directing secretion. The straightjacket domain stretch occupies residues 30–74 (LSTCKTIDMELVKRKRIEAIRGQILSKLRLASPPSQGDVPPGPLP). Residues 75–271 (EAVLALYNST…ATPLERAQHL (197 aa)) are arm domain. 3 N-linked (GlcNAc...) asparagine glycosylation sites follow: asparagine 82, asparagine 136, and asparagine 176. Positions 226-252 (DSKDNTLRVEINGIGPKRRGDLAAIHG) are bowtie tail. Residues 244-246 (RGD) carry the Cell attachment site motif. Intrachain disulfides connect cysteine 285/cysteine 294, cysteine 293/cysteine 356, cysteine 322/cysteine 387, and cysteine 326/cysteine 389.

The protein belongs to the TGF-beta family. Homodimer; disulfide-linked. Interacts with the serine proteases, HTRA1 and HTRA3: the interaction with either inhibits TGFB1-mediated signaling and the HTRA protease activity is required for this inhibition. May interact with THSD4; this interaction may lead to sequestration by FBN1 microfibril assembly and attenuation of TGFB signaling. Interacts with CD109, DPT and ASPN. Interacts with EFEMP2. Interacts with TSKU; the interaction contributes to regulation of the hair cycle. Interacts with TGFBR3. As to quaternary structure, homodimer; disulfide-linked. Interacts with transforming growth factor beta-1 (TGF-beta-1) chain; interaction is non-covalent and maintains TGF-beta-1 in a latent state; each latency-associated peptide (LAP) monomer interacts with TGF-beta-1 in the other monomer. Interacts with LTBP1; leading to regulation of TGF-beta-1 activation. Interacts with LRRC32/GARP; leading to regulation of TGF-beta-1 activation on the surface of activated regulatory T-cells (Tregs). Interacts with LRRC33/NRROS; leading to regulation of TGF-beta-1 in macrophages and microglia. Interacts (via cell attachment site) with integrins ITGAV and ITGB6 (ITGAV:ITGB6), leading to release of the active TGF-beta-1. Interacts with NREP; the interaction results in a decrease in TGFB1 autoinduction. Interacts with HSP90AB1; inhibits latent TGFB1 activation. In terms of assembly, homodimer; disulfide-linked. Interacts with TGF-beta receptors (TGFBR1 and TGFBR2), leading to signal transduction. Post-translationally, transforming growth factor beta-1 proprotein: The precursor proprotein is cleaved in the Golgi apparatus by FURIN to form Transforming growth factor beta-1 (TGF-beta-1) and Latency-associated peptide (LAP) chains, which remain non-covalently linked, rendering TGF-beta-1 inactive. N-glycosylated. Deglycosylation leads to activation of Transforming growth factor beta-1 (TGF-beta-1); mechanisms triggering deglycosylation-driven activation of TGF-beta-1 are however unclear.

It is found in the secreted. Its subcellular location is the extracellular space. The protein resides in the extracellular matrix. Functionally, transforming growth factor beta-1 proprotein: Precursor of the Latency-associated peptide (LAP) and Transforming growth factor beta-1 (TGF-beta-1) chains, which constitute the regulatory and active subunit of TGF-beta-1, respectively. In terms of biological role, required to maintain the Transforming growth factor beta-1 (TGF-beta-1) chain in a latent state during storage in extracellular matrix. Associates non-covalently with TGF-beta-1 and regulates its activation via interaction with 'milieu molecules', such as LTBP1, LRRC32/GARP and LRRC33/NRROS, that control activation of TGF-beta-1. Interaction with LRRC33/NRROS regulates activation of TGF-beta-1 in macrophages and microglia. Interaction with LRRC32/GARP controls activation of TGF-beta-1 on the surface of activated regulatory T-cells (Tregs). Interaction with integrins (ITGAV:ITGB6 or ITGAV:ITGB8) results in distortion of the Latency-associated peptide chain and subsequent release of the active TGF-beta-1. Multifunctional protein that regulates the growth and differentiation of various cell types and is involved in various processes, such as normal development, immune function, microglia function and responses to neurodegeneration. Activation into mature form follows different steps: following cleavage of the proprotein in the Golgi apparatus, Latency-associated peptide (LAP) and Transforming growth factor beta-1 (TGF-beta-1) chains remain non-covalently linked rendering TGF-beta-1 inactive during storage in extracellular matrix. At the same time, LAP chain interacts with 'milieu molecules', such as LTBP1, LRRC32/GARP and LRRC33/NRROS that control activation of TGF-beta-1 and maintain it in a latent state during storage in extracellular milieus. TGF-beta-1 is released from LAP by integrins (ITGAV:ITGB6 or ITGAV:ITGB8): integrin-binding to LAP stabilizes an alternative conformation of the LAP bowtie tail and results in distortion of the LAP chain and subsequent release of the active TGF-beta-1. Once activated following release of LAP, TGF-beta-1 acts by binding to TGF-beta receptors (TGFBR1 and TGFBR2), which transduce signal. While expressed by many cells types, TGF-beta-1 only has a very localized range of action within cell environment thanks to fine regulation of its activation by Latency-associated peptide chain (LAP) and 'milieu molecules'. Plays an important role in bone remodeling: acts as a potent stimulator of osteoblastic bone formation, causing chemotaxis, proliferation and differentiation in committed osteoblasts. Can promote either T-helper 17 cells (Th17) or regulatory T-cells (Treg) lineage differentiation in a concentration-dependent manner. At high concentrations, leads to FOXP3-mediated suppression of RORC and down-regulation of IL-17 expression, favoring Treg cell development. At low concentrations in concert with IL-6 and IL-21, leads to expression of the IL-17 and IL-23 receptors, favoring differentiation to Th17 cells. Stimulates sustained production of collagen through the activation of CREB3L1 by regulated intramembrane proteolysis (RIP). Mediates SMAD2/3 activation by inducing its phosphorylation and subsequent translocation to the nucleus. Positively regulates odontoblastic differentiation in dental papilla cells, via promotion of IPO7-mediated translocation of phosphorylated SMAD2 to the nucleus and subsequent transcription of target genes. Can induce epithelial-to-mesenchymal transition (EMT) and cell migration in various cell types. This Cavia porcellus (Guinea pig) protein is Transforming growth factor beta-1 proprotein (TGFB1).